The following is a 127-amino-acid chain: Protein ApaG (127 aa).

Positions 3 to 127 (NDQKYDIKVQ…FILSVPRVLH (125 aa)) constitute an ApaG domain.

This chain is Protein ApaG, found in Nitrosomonas eutropha (strain DSM 101675 / C91 / Nm57).